A 355-amino-acid chain; its full sequence is Protein pelota homolog (355 aa).

This sequence belongs to the eukaryotic release factor 1 family. Pelota subfamily. In terms of assembly, monomer. The cofactor is a divalent metal cation.

The protein localises to the cytoplasm. May function in recognizing stalled ribosomes, interact with stem-loop structures in stalled mRNA molecules, and effect endonucleolytic cleavage of the mRNA. May play a role in the release non-functional ribosomes and degradation of damaged mRNAs. Has endoribonuclease activity. This Haloarcula marismortui (strain ATCC 43049 / DSM 3752 / JCM 8966 / VKM B-1809) (Halobacterium marismortui) protein is Protein pelota homolog.